Here is a 217-residue protein sequence, read N- to C-terminus: Large ribosomal subunit protein eL14 (217 aa).

An N6-acetyllysine modification is found at lysine 79. Lysine 85 carries the post-translational modification N6-acetyllysine; alternate. Residue lysine 85 is modified to N6-succinyllysine; alternate. A Glycyl lysine isopeptide (Lys-Gly) (interchain with G-Cter in SUMO2) cross-link involves residue lysine 124. Serine 139 is subject to Phosphoserine. The tract at residues 162 to 217 (KVPAKKATGPGKKAAGQKAPAQKAAGQKAAPPAKGQKGQKTPAQKAPAPKAAGKKA) is disordered. The stretch at 173-177 (KKAAG) is one 1-1; approximate repeat. Residues 173–192 (KKAAGQKAPAQKAAGQKAAP) form a 4 X 5 AA tandem repeats of Q-K-A-[APS]-X region. 5 repeat units span residues 178 to 182 (QKAPA), 183 to 187 (QKAAG), 188 to 192 (QKAAP), 195 to 197 (KGQ), and 198 to 200 (KGQ). Residues 195–200 (KGQKGQ) form a 2 X 3 AA tandem repeats of K-G-Q region. Lysine 206 bears the N6-succinyllysine mark.

It belongs to the eukaryotic ribosomal protein eL14 family. In terms of assembly, component of the large ribosomal subunit.

It is found in the cytoplasm. Its function is as follows. Component of the large ribosomal subunit. The ribosome is a large ribonucleoprotein complex responsible for the synthesis of proteins in the cell. The sequence is that of Large ribosomal subunit protein eL14 (Rpl14) from Mus musculus (Mouse).